Here is a 200-residue protein sequence, read N- to C-terminus: Chromophore lyase CpcT/CpeT 2 (200 aa).

Belongs to the CpcT/CpeT biliprotein lyase family.

In terms of biological role, covalently attaches a chromophore to Cys residue(s) of phycobiliproteins. The protein is Chromophore lyase CpcT/CpeT 2 of Microcystis aeruginosa (strain NIES-843 / IAM M-2473).